A 245-amino-acid chain; its full sequence is tRNA1(Val) (adenine(37)-N6)-methyltransferase (245 aa).

The protein belongs to the methyltransferase superfamily. tRNA (adenine-N(6)-)-methyltransferase family.

The protein localises to the cytoplasm. It catalyses the reaction adenosine(37) in tRNA1(Val) + S-adenosyl-L-methionine = N(6)-methyladenosine(37) in tRNA1(Val) + S-adenosyl-L-homocysteine + H(+). Functionally, specifically methylates the adenine in position 37 of tRNA(1)(Val) (anticodon cmo5UAC). This is tRNA1(Val) (adenine(37)-N6)-methyltransferase from Salmonella enteritidis PT4 (strain P125109).